A 421-amino-acid chain; its full sequence is UDP-N-acetylglucosamine 1-carboxyvinyltransferase (421 aa).

22–23 (KN) contributes to the phosphoenolpyruvate binding site. Arg93 lines the UDP-N-acetyl-alpha-D-glucosamine pocket. The active-site Proton donor is Cys117. 2-(S-cysteinyl)pyruvic acid O-phosphothioketal is present on Cys117. Residues 122-126 (RPVDL), Asp308, and Val330 each bind UDP-N-acetyl-alpha-D-glucosamine.

The protein belongs to the EPSP synthase family. MurA subfamily.

The protein localises to the cytoplasm. It carries out the reaction phosphoenolpyruvate + UDP-N-acetyl-alpha-D-glucosamine = UDP-N-acetyl-3-O-(1-carboxyvinyl)-alpha-D-glucosamine + phosphate. It functions in the pathway cell wall biogenesis; peptidoglycan biosynthesis. Its function is as follows. Cell wall formation. Adds enolpyruvyl to UDP-N-acetylglucosamine. This Ectopseudomonas mendocina (strain ymp) (Pseudomonas mendocina) protein is UDP-N-acetylglucosamine 1-carboxyvinyltransferase.